We begin with the raw amino-acid sequence, 480 residues long: Aspartyl/glutamyl-tRNA(Asn/Gln) amidotransferase subunit B (480 aa).

It belongs to the GatB/GatE family. GatB subfamily. In terms of assembly, heterotrimer of A, B and C subunits.

The catalysed reaction is L-glutamyl-tRNA(Gln) + L-glutamine + ATP + H2O = L-glutaminyl-tRNA(Gln) + L-glutamate + ADP + phosphate + H(+). The enzyme catalyses L-aspartyl-tRNA(Asn) + L-glutamine + ATP + H2O = L-asparaginyl-tRNA(Asn) + L-glutamate + ADP + phosphate + 2 H(+). Its function is as follows. Allows the formation of correctly charged Asn-tRNA(Asn) or Gln-tRNA(Gln) through the transamidation of misacylated Asp-tRNA(Asn) or Glu-tRNA(Gln) in organisms which lack either or both of asparaginyl-tRNA or glutaminyl-tRNA synthetases. The reaction takes place in the presence of glutamine and ATP through an activated phospho-Asp-tRNA(Asn) or phospho-Glu-tRNA(Gln). This is Aspartyl/glutamyl-tRNA(Asn/Gln) amidotransferase subunit B from Streptococcus pneumoniae (strain 70585).